A 1160-amino-acid polypeptide reads, in one-letter code: DNA polymerase III subunit alpha (1160 aa).

The protein localises to the cytoplasm. The catalysed reaction is DNA(n) + a 2'-deoxyribonucleoside 5'-triphosphate = DNA(n+1) + diphosphate. Its function is as follows. DNA polymerase III is a complex, multichain enzyme responsible for most of the replicative synthesis in bacteria. This DNA polymerase also exhibits 3' to 5' exonuclease activity. The alpha chain is the DNA polymerase. This Escherichia coli O6:H1 (strain CFT073 / ATCC 700928 / UPEC) protein is DNA polymerase III subunit alpha (dnaE).